The primary structure comprises 416 residues: MDKLLIRGGKPLNGPIRVSGSKNAALPILLAAPLLTEKTVVDNVPRLRDIHTTLKLNEILGCPSTFEGNTVTMEPAANLNPEAPYDLVRTMRASVLVLGPLLARTGRARVALPGGCAIGARPVNLHLTALEKMGATFTLEAGYIEGRCDRLTGAHIVFDFPTVGGTENLLMAASLAEGTTILENAAREPEVADLADFLNAMGAKITGHGTSVITIEGVPSLGGGRYSVMPDRIEAATYMIAAAITGGELHLECCPFMELDAVVSKLREMGVVIEATNAGVAVRRQGQLVGVDVATQVYPGFPTDVQAQIMALMCVAVGSSSIRETIFENRFMHVQELVRLGAQIRISSQTAFIRGVGTLTGAPVMASDLRASASLVLAGLAAKGETLIQRVYHLDRGYEAMEVKLQNVGADIERLT.

22–23 is a phosphoenolpyruvate binding site; that stretch reads KN. Arg92 provides a ligand contact to UDP-N-acetyl-alpha-D-glucosamine. Cys116 acts as the Proton donor in catalysis. The residue at position 116 (Cys116) is a 2-(S-cysteinyl)pyruvic acid O-phosphothioketal. Positions 304 and 326 each coordinate UDP-N-acetyl-alpha-D-glucosamine.

Belongs to the EPSP synthase family. MurA subfamily.

The protein localises to the cytoplasm. The catalysed reaction is phosphoenolpyruvate + UDP-N-acetyl-alpha-D-glucosamine = UDP-N-acetyl-3-O-(1-carboxyvinyl)-alpha-D-glucosamine + phosphate. It participates in cell wall biogenesis; peptidoglycan biosynthesis. Functionally, cell wall formation. Adds enolpyruvyl to UDP-N-acetylglucosamine. This chain is UDP-N-acetylglucosamine 1-carboxyvinyltransferase, found in Solidesulfovibrio magneticus (strain ATCC 700980 / DSM 13731 / RS-1) (Desulfovibrio magneticus).